Reading from the N-terminus, the 243-residue chain is tRNA (guanine-N(1)-)-methyltransferase (243 aa).

Residues Gly-108 and 127–132 (LGDFVL) contribute to the S-adenosyl-L-methionine site.

The protein belongs to the RNA methyltransferase TrmD family. Homodimer.

It is found in the cytoplasm. It catalyses the reaction guanosine(37) in tRNA + S-adenosyl-L-methionine = N(1)-methylguanosine(37) in tRNA + S-adenosyl-L-homocysteine + H(+). Functionally, specifically methylates guanosine-37 in various tRNAs. The protein is tRNA (guanine-N(1)-)-methyltransferase of Streptococcus pyogenes serotype M2 (strain MGAS10270).